The primary structure comprises 148 residues: 3-dehydroquinate dehydratase (148 aa).

The active-site Proton acceptor is Tyr23. The substrate site is built by Asn75, His81, and Asp88. His101 acts as the Proton donor in catalysis. Residues 102–103 (IS) and Arg112 each bind substrate.

Belongs to the type-II 3-dehydroquinase family. As to quaternary structure, homododecamer.

The enzyme catalyses 3-dehydroquinate = 3-dehydroshikimate + H2O. It functions in the pathway metabolic intermediate biosynthesis; chorismate biosynthesis; chorismate from D-erythrose 4-phosphate and phosphoenolpyruvate: step 3/7. In terms of biological role, catalyzes a trans-dehydration via an enolate intermediate. This is 3-dehydroquinate dehydratase from Methylococcus capsulatus (strain ATCC 33009 / NCIMB 11132 / Bath).